The sequence spans 223 residues: Endonuclease V (223 aa).

Mg(2+)-binding residues include Asp35 and Asp103.

Belongs to the endonuclease V family. Mg(2+) serves as cofactor.

The protein localises to the cytoplasm. The enzyme catalyses Endonucleolytic cleavage at apurinic or apyrimidinic sites to products with a 5'-phosphate.. Its function is as follows. DNA repair enzyme involved in the repair of deaminated bases. Selectively cleaves double-stranded DNA at the second phosphodiester bond 3' to a deoxyinosine leaving behind the intact lesion on the nicked DNA. The sequence is that of Endonuclease V from Escherichia coli O45:K1 (strain S88 / ExPEC).